A 267-amino-acid polypeptide reads, in one-letter code: 2-keto-3-deoxy-L-rhamnonate aldolase (267 aa).

The Proton acceptor role is filled by histidine 49. Glutamine 151 lines the substrate pocket. Position 153 (glutamate 153) interacts with Mg(2+). The substrate site is built by alanine 178 and aspartate 179. Aspartate 179 contributes to the Mg(2+) binding site.

Belongs to the HpcH/HpaI aldolase family. KDR aldolase subfamily. Homohexamer. Mg(2+) is required as a cofactor.

It carries out the reaction 2-dehydro-3-deoxy-L-rhamnonate = (S)-lactaldehyde + pyruvate. Functionally, catalyzes the reversible retro-aldol cleavage of 2-keto-3-deoxy-L-rhamnonate (KDR) to pyruvate and lactaldehyde. The polypeptide is 2-keto-3-deoxy-L-rhamnonate aldolase (Salmonella typhi).